The following is a 632-amino-acid chain: 1-deoxy-D-xylulose-5-phosphate synthase (632 aa).

Residues His77 and 118–120 (GHS) contribute to the thiamine diphosphate site. A Mg(2+)-binding site is contributed by Asp149. Thiamine diphosphate is bound by residues 150–151 (GA), Asn178, Tyr289, and Glu372. Asn178 lines the Mg(2+) pocket.

The protein belongs to the transketolase family. DXPS subfamily. As to quaternary structure, homodimer. Mg(2+) is required as a cofactor. The cofactor is thiamine diphosphate.

It catalyses the reaction D-glyceraldehyde 3-phosphate + pyruvate + H(+) = 1-deoxy-D-xylulose 5-phosphate + CO2. Its pathway is metabolic intermediate biosynthesis; 1-deoxy-D-xylulose 5-phosphate biosynthesis; 1-deoxy-D-xylulose 5-phosphate from D-glyceraldehyde 3-phosphate and pyruvate: step 1/1. Functionally, catalyzes the acyloin condensation reaction between C atoms 2 and 3 of pyruvate and glyceraldehyde 3-phosphate to yield 1-deoxy-D-xylulose-5-phosphate (DXP). The chain is 1-deoxy-D-xylulose-5-phosphate synthase from Listeria innocua serovar 6a (strain ATCC BAA-680 / CLIP 11262).